The chain runs to 357 residues: Peptide chain release factor 1 (357 aa).

At Q234 the chain carries N5-methylglutamine. The tract at residues 283–313 (SKKQEQRSSNRKQQVGSGDRSERIRTYNFPQ) is disordered.

This sequence belongs to the prokaryotic/mitochondrial release factor family. Post-translationally, methylated by PrmC. Methylation increases the termination efficiency of RF1.

The protein localises to the cytoplasm. In terms of biological role, peptide chain release factor 1 directs the termination of translation in response to the peptide chain termination codons UAG and UAA. The sequence is that of Peptide chain release factor 1 (prfA) from Borreliella burgdorferi (strain ATCC 35210 / DSM 4680 / CIP 102532 / B31) (Borrelia burgdorferi).